We begin with the raw amino-acid sequence, 1204 residues long: ATP-dependent helicase/nuclease subunit A (1204 aa).

The region spanning 2–469 (TNFTKEQDQA…IILADNFRST (468 aa)) is the UvrD-like helicase ATP-binding domain. ATP is bound at residue 23–30 (ASAGSGKT). Residues 497 to 784 (GQLQFGASYY…KLMTIHASKG (288 aa)) enclose the UvrD-like helicase C-terminal domain.

This sequence belongs to the helicase family. AddA subfamily. Heterodimer of AddA and AddB/RexB. The cofactor is Mg(2+).

The catalysed reaction is Couples ATP hydrolysis with the unwinding of duplex DNA by translocating in the 3'-5' direction.. The enzyme catalyses ATP + H2O = ADP + phosphate + H(+). Its function is as follows. The heterodimer acts as both an ATP-dependent DNA helicase and an ATP-dependent, dual-direction single-stranded exonuclease. Recognizes the chi site generating a DNA molecule suitable for the initiation of homologous recombination. The AddA nuclease domain is required for chi fragment generation; this subunit has the helicase and 3' -&gt; 5' nuclease activities. The polypeptide is ATP-dependent helicase/nuclease subunit A (Lactobacillus gasseri (strain ATCC 33323 / DSM 20243 / BCRC 14619 / CIP 102991 / JCM 1131 / KCTC 3163 / NCIMB 11718 / NCTC 13722 / AM63)).